Consider the following 443-residue polypeptide: UDP-N-acetylmuramate--L-alanine ligase (443 aa).

Gly-110 to Ser-116 lines the ATP pocket.

The protein belongs to the MurCDEF family.

Its subcellular location is the cytoplasm. The enzyme catalyses UDP-N-acetyl-alpha-D-muramate + L-alanine + ATP = UDP-N-acetyl-alpha-D-muramoyl-L-alanine + ADP + phosphate + H(+). It participates in cell wall biogenesis; peptidoglycan biosynthesis. Cell wall formation. This is UDP-N-acetylmuramate--L-alanine ligase from Streptococcus gordonii (strain Challis / ATCC 35105 / BCRC 15272 / CH1 / DL1 / V288).